Here is a 251-residue protein sequence, read N- to C-terminus: Tryptophan synthase alpha chain (251 aa).

Residues E36 and D47 each act as proton acceptor in the active site.

This sequence belongs to the TrpA family. In terms of assembly, tetramer of two alpha and two beta chains.

It carries out the reaction (1S,2R)-1-C-(indol-3-yl)glycerol 3-phosphate + L-serine = D-glyceraldehyde 3-phosphate + L-tryptophan + H2O. It functions in the pathway amino-acid biosynthesis; L-tryptophan biosynthesis; L-tryptophan from chorismate: step 5/5. In terms of biological role, the alpha subunit is responsible for the aldol cleavage of indoleglycerol phosphate to indole and glyceraldehyde 3-phosphate. The protein is Tryptophan synthase alpha chain of Thermococcus kodakarensis (strain ATCC BAA-918 / JCM 12380 / KOD1) (Pyrococcus kodakaraensis (strain KOD1)).